The sequence spans 415 residues: Gamma-glutamyl phosphate reductase (415 aa).

Belongs to the gamma-glutamyl phosphate reductase family.

It is found in the cytoplasm. The enzyme catalyses L-glutamate 5-semialdehyde + phosphate + NADP(+) = L-glutamyl 5-phosphate + NADPH + H(+). It functions in the pathway amino-acid biosynthesis; L-proline biosynthesis; L-glutamate 5-semialdehyde from L-glutamate: step 2/2. Functionally, catalyzes the NADPH-dependent reduction of L-glutamate 5-phosphate into L-glutamate 5-semialdehyde and phosphate. The product spontaneously undergoes cyclization to form 1-pyrroline-5-carboxylate. This Pseudoalteromonas translucida (strain TAC 125) protein is Gamma-glutamyl phosphate reductase.